We begin with the raw amino-acid sequence, 223 residues long: MELTLHEARVIGCLLEKEITTPEQYPLSLNSLTLACNQKTSREPVLELSETQVQIAVDSLNRKRLISEQSGFGSRVVKYKHRFCNTEFSELQLSPAALAIVCLLLLRGPQTPGELRTRSNRLHEFKDVIEVEDCIRQLMNREKPFLKQLPREAGRRESRYVELFSASSSQLETAQPESASHTVAHVAVSLDAEPLELTKRVTELEQQVAELTQKLDELIASLS.

This sequence belongs to the UPF0502 family.

The protein is UPF0502 protein Sbal223_2520 of Shewanella baltica (strain OS223).